Here is a 345-residue protein sequence, read N- to C-terminus: Eukaryotic translation initiation factor 3 subunit F (345 aa).

An MPN domain is found at Val-30–Gly-166. The interval Glu-310–Ala-345 is disordered. Low complexity predominate over residues Ala-312–Gly-321. Gly residues predominate over residues Gln-322–Gly-331. Over residues Thr-335–Ala-345 the composition is skewed to basic and acidic residues.

Belongs to the eIF-3 subunit F family. In terms of assembly, component of the eukaryotic translation initiation factor 3 (eIF-3) complex.

It is found in the cytoplasm. Component of the eukaryotic translation initiation factor 3 (eIF-3) complex, which is involved in protein synthesis of a specialized repertoire of mRNAs and, together with other initiation factors, stimulates binding of mRNA and methionyl-tRNAi to the 40S ribosome. The eIF-3 complex specifically targets and initiates translation of a subset of mRNAs involved in cell proliferation. The sequence is that of Eukaryotic translation initiation factor 3 subunit F from Aspergillus fumigatus (strain CBS 144.89 / FGSC A1163 / CEA10) (Neosartorya fumigata).